The following is a 264-amino-acid chain: Glutamate racemase (264 aa).

Substrate contacts are provided by residues 11-12 (DS) and 43-44 (YG). C74 functions as the Proton donor/acceptor in the catalytic mechanism. Position 75 to 76 (75 to 76 (NT)) interacts with substrate. The Proton donor/acceptor role is filled by C193. 194–195 (TH) lines the substrate pocket.

It belongs to the aspartate/glutamate racemases family.

It catalyses the reaction L-glutamate = D-glutamate. It functions in the pathway cell wall biogenesis; peptidoglycan biosynthesis. Functionally, provides the (R)-glutamate required for cell wall biosynthesis. This is Glutamate racemase from Bifidobacterium longum (strain DJO10A).